The following is a 391-amino-acid chain: Somatostatin receptor type 1 (391 aa).

The segment covering 1–11 (MFPNGTASSPS) has biased composition (low complexity). The disordered stretch occupies residues 1–49 (MFPNGTASSPSSPSPSPGSCGEGGGSRGPGAGAADGMEEPGRNASQNGT). Topologically, residues 1–55 (MFPNGTASSPSSPSPSPGSCGEGGGSRGPGAGAADGMEEPGRNASQNGTLSEGQG) are extracellular. Asparagine 4 carries N-linked (GlcNAc...) asparagine glycosylation. The span at 20 to 33 (CGEGGGSRGPGAGA) shows a compositional bias: gly residues. N-linked (GlcNAc...) asparagine glycosylation is found at asparagine 43 and asparagine 47. Residues 56–83 (SAILISFIYSVVCLVGLCGNSMVIYVIL) form a helical membrane-spanning segment. Over 84–93 (RYAKMKTATN) the chain is Cytoplasmic. A helical transmembrane segment spans residues 94–119 (IYILNLAIADELLMLSVPFLVTSTLL). Residues 120–130 (RHWPFGALLCR) lie on the Extracellular side of the membrane. Cysteine 129 and cysteine 207 are disulfide-bonded. Residues 131–152 (LVLSVDAVNMFTSIYCLTVLSV) form a helical membrane-spanning segment. Topologically, residues 153-174 (DRYVAVVHPIKAARYRRPTVAK) are cytoplasmic. The helical transmembrane segment at 175-195 (VVNLGVWVLSLLVILPIVVFS) threads the bilayer. At 196–218 (RTAANSDGTVACNMLMPEPAQRW) the chain is on the extracellular side. A helical membrane pass occupies residues 219-243 (LVGFVLYTFLMGFLLPVGAICLCYV). Topologically, residues 244–269 (LIIAKMRMVALKAGWQQRKRSERKIT) are cytoplasmic. Residues 270–295 (LMVMMVVMVFVICWMPFYVVQLVNVF) traverse the membrane as a helical segment. At 296–302 (AEQDDAT) the chain is on the extracellular side. The chain crosses the membrane as a helical span at residues 303-326 (VSQLSVILGYANSCANPILYGFLS). Over 327-391 (DNFKRSFQRI…GTCTSRITTL (65 aa)) the chain is Cytoplasmic. Cysteine 338 is lipidated: S-palmitoyl cysteine.

The protein belongs to the G-protein coupled receptor 1 family. As to quaternary structure, interacts with SKB1.

The protein localises to the cell membrane. Receptor for somatostatin with higher affinity for somatostatin-14 than -28. This receptor is coupled via pertussis toxin sensitive G proteins to inhibition of adenylyl cyclase. In addition it stimulates phosphotyrosine phosphatase and Na(+)/H(+) exchanger via pertussis toxin insensitive G proteins. The sequence is that of Somatostatin receptor type 1 (SSTR1) from Canis lupus familiaris (Dog).